A 300-amino-acid chain; its full sequence is Protein p34 (300 aa).

5 helical membrane passes run 14-34 (YLSVTTALIILIIKLYAWVVT), 39-59 (ILASLIDSMLDITSSFINLVA), 87-107 (SIFFFASAFFVGFASVKSLFI), 119-139 (IIMYLCMFLTIILVLYQTYVI), and 170-190 (LSDYFWFVDPLFGVVISLYIF).

Belongs to the cation diffusion facilitator (CDF) transporter (TC 2.A.4) family.

It localises to the cell membrane. The chain is Protein p34 (p34) from Rickettsia prowazekii (strain Madrid E).